A 123-amino-acid polypeptide reads, in one-letter code: Ribosome-binding factor A (123 aa).

The protein belongs to the RbfA family. In terms of assembly, monomer. Binds 30S ribosomal subunits, but not 50S ribosomal subunits or 70S ribosomes.

The protein localises to the cytoplasm. Its function is as follows. One of several proteins that assist in the late maturation steps of the functional core of the 30S ribosomal subunit. Associates with free 30S ribosomal subunits (but not with 30S subunits that are part of 70S ribosomes or polysomes). Required for efficient processing of 16S rRNA. May interact with the 5'-terminal helix region of 16S rRNA. In Neisseria gonorrhoeae (strain NCCP11945), this protein is Ribosome-binding factor A.